The primary structure comprises 473 residues: Glutamate--tRNA ligase (473 aa).

Positions 13–23 match the 'HIGH' region motif; that stretch reads PSPTGFLHVGG. The short motif at 240-244 is the 'KMSKS' region element; it reads KLSKR. Position 243 (K243) interacts with ATP.

The protein belongs to the class-I aminoacyl-tRNA synthetase family. Glutamate--tRNA ligase type 1 subfamily. As to quaternary structure, monomer.

The protein localises to the cytoplasm. The enzyme catalyses tRNA(Glu) + L-glutamate + ATP = L-glutamyl-tRNA(Glu) + AMP + diphosphate. Catalyzes the attachment of glutamate to tRNA(Glu) in a two-step reaction: glutamate is first activated by ATP to form Glu-AMP and then transferred to the acceptor end of tRNA(Glu). The polypeptide is Glutamate--tRNA ligase (Shewanella denitrificans (strain OS217 / ATCC BAA-1090 / DSM 15013)).